We begin with the raw amino-acid sequence, 512 residues long: Dihydroniloticin synthase CYP71CD2 (512 aa).

Residues 1 to 21 (MNLQLDYFSITSFLVFLVVLF) traverse the membrane as a helical segment. Asn436 lines the heme pocket.

The protein belongs to the cytochrome P450 family. It depends on heme as a cofactor. In terms of tissue distribution, mainly expressed in petioles and roots, and, to a lower extent, in leaves.

Its subcellular location is the membrane. It catalyses the reaction tirucalla-7,24-dien-3beta-ol + 2 reduced [NADPH--hemoprotein reductase] + 2 O2 = dihydroniloticin + 2 oxidized [NADPH--hemoprotein reductase] + 2 H2O + 2 H(+). It functions in the pathway secondary metabolite biosynthesis; terpenoid biosynthesis. Its function is as follows. Monooxygenase involved in the biosynthesis of limonoids triterpene natural products such as azadirachtin, an antifeedant widely used as bioinsecticide, and possessing many medicinal applications including anti-tumoral, anti-malarial, anti-rheumatic, antibacterial, anti-inflammatory, anti-pyretic and diuretic effects. Catalyzes the conversion of tirucalladienol to dihydroniloticin. This Melia azedarach (Chinaberry tree) protein is Dihydroniloticin synthase CYP71CD2.